The primary structure comprises 118 residues: MPRVKRGVTARARHKKVMKAAKGYYGARSRVYRVAVQAVTKAGQYAYRDRRQKKRQFRQLWIARINAAARQNGLSYSRLINGLKKASIEIDRKILSDIAVHDKLAFTALVEKAKAALV.

Belongs to the bacterial ribosomal protein bL20 family.

Functionally, binds directly to 23S ribosomal RNA and is necessary for the in vitro assembly process of the 50S ribosomal subunit. It is not involved in the protein synthesizing functions of that subunit. The protein is Large ribosomal subunit protein bL20 of Aeromonas hydrophila subsp. hydrophila (strain ATCC 7966 / DSM 30187 / BCRC 13018 / CCUG 14551 / JCM 1027 / KCTC 2358 / NCIMB 9240 / NCTC 8049).